A 66-amino-acid chain; its full sequence is Large ribosomal subunit protein bL31 (66 aa).

4 residues coordinate Zn(2+): Cys16, Cys18, Cys36, and Cys39.

Belongs to the bacterial ribosomal protein bL31 family. Type A subfamily. In terms of assembly, part of the 50S ribosomal subunit. Zn(2+) serves as cofactor.

Binds the 23S rRNA. This chain is Large ribosomal subunit protein bL31, found in Trichlorobacter lovleyi (strain ATCC BAA-1151 / DSM 17278 / SZ) (Geobacter lovleyi).